A 147-amino-acid chain; its full sequence is UPF0260 protein CJA_2436 (147 aa).

It belongs to the UPF0260 family.

The protein is UPF0260 protein CJA_2436 of Cellvibrio japonicus (strain Ueda107) (Pseudomonas fluorescens subsp. cellulosa).